We begin with the raw amino-acid sequence, 112 residues long: MAYRKLGRLAGHRKMMLRNIVTSLLKHGKIETTELRAKELKSLAEKMITLGKRGDLHSRRQALAYLLDEDVVTKLFKEIGPRYADKNGGYTRIVKTGFRQGDGAPMVLIELV.

This sequence belongs to the bacterial ribosomal protein bL17 family. In terms of assembly, part of the 50S ribosomal subunit. Contacts protein L32.

This is Large ribosomal subunit protein bL17 from Moorella thermoacetica (strain ATCC 39073 / JCM 9320).